Here is a 468-residue protein sequence, read N- to C-terminus: 6-phosphogluconate dehydrogenase, decarboxylating (468 aa).

Residues 10 to 15 (GMAVMG), 33 to 35 (NRS), 74 to 76 (VKA), and asparagine 102 contribute to the NADP(+) site. Residues asparagine 102 and 128 to 130 (SGG) each bind substrate. Lysine 183 (proton acceptor) is an active-site residue. 186 to 187 (HN) contacts substrate. Glutamate 190 serves as the catalytic Proton donor. Substrate is bound by residues tyrosine 191, lysine 260, arginine 287, arginine 445, and histidine 451.

It belongs to the 6-phosphogluconate dehydrogenase family. In terms of assembly, homodimer.

It catalyses the reaction 6-phospho-D-gluconate + NADP(+) = D-ribulose 5-phosphate + CO2 + NADPH. Its pathway is carbohydrate degradation; pentose phosphate pathway; D-ribulose 5-phosphate from D-glucose 6-phosphate (oxidative stage): step 3/3. In terms of biological role, catalyzes the oxidative decarboxylation of 6-phosphogluconate to ribulose 5-phosphate and CO(2), with concomitant reduction of NADP to NADPH. This Salmonella typhimurium (strain LT2 / SGSC1412 / ATCC 700720) protein is 6-phosphogluconate dehydrogenase, decarboxylating (gnd).